A 936-amino-acid chain; its full sequence is Isoleucine--tRNA ligase (936 aa).

Residues 58–68 carry the 'HIGH' region motif; the sequence is PYANGNIHIGH. Glutamate 560 contributes to the L-isoleucyl-5'-AMP binding site. A 'KMSKS' region motif is present at residues 601 to 605; it reads KMSKS. Lysine 604 provides a ligand contact to ATP. Zn(2+) is bound by residues cysteine 899, cysteine 902, cysteine 919, and cysteine 922.

It belongs to the class-I aminoacyl-tRNA synthetase family. IleS type 1 subfamily. In terms of assembly, monomer. Zn(2+) serves as cofactor.

It is found in the cytoplasm. The enzyme catalyses tRNA(Ile) + L-isoleucine + ATP = L-isoleucyl-tRNA(Ile) + AMP + diphosphate. In terms of biological role, catalyzes the attachment of isoleucine to tRNA(Ile). As IleRS can inadvertently accommodate and process structurally similar amino acids such as valine, to avoid such errors it has two additional distinct tRNA(Ile)-dependent editing activities. One activity is designated as 'pretransfer' editing and involves the hydrolysis of activated Val-AMP. The other activity is designated 'posttransfer' editing and involves deacylation of mischarged Val-tRNA(Ile). The sequence is that of Isoleucine--tRNA ligase from Proteus mirabilis (strain HI4320).